Consider the following 330-residue polypeptide: Tryptophan--tRNA ligase (330 aa).

ATP-binding positions include 10–12 (QPS) and 18–19 (GN). The short motif at 11–19 (PSGSVTLGN) is the 'HIGH' region element. Aspartate 133 contacts L-tryptophan. Residues 145 to 147 (GED), isoleucine 184, and 193 to 197 (KMSKS) each bind ATP. The 'KMSKS' region signature appears at 193–197 (KMSKS).

It belongs to the class-I aminoacyl-tRNA synthetase family. Homodimer.

It localises to the cytoplasm. It catalyses the reaction tRNA(Trp) + L-tryptophan + ATP = L-tryptophyl-tRNA(Trp) + AMP + diphosphate + H(+). Functionally, catalyzes the attachment of tryptophan to tRNA(Trp). This is Tryptophan--tRNA ligase from Bacillus subtilis (strain 168).